A 320-amino-acid chain; its full sequence is Lipoyl synthase (320 aa).

Residues 1–29 show a composition bias toward basic and acidic residues; it reads MIGKLVRDLKIPDQRHPEKAHRPDNDQPR. The tract at residues 1 to 32 is disordered; sequence MIGKLVRDLKIPDQRHPEKAHRPDNDQPRKPS. Positions 60, 65, 71, 86, 90, 93, and 300 each coordinate [4Fe-4S] cluster. The region spanning 71–289 is the Radical SAM core domain; the sequence is CWGQGHATMM…EKAAYGKGFL (219 aa).

The protein belongs to the radical SAM superfamily. Lipoyl synthase family. The cofactor is [4Fe-4S] cluster.

It localises to the cytoplasm. It catalyses the reaction [[Fe-S] cluster scaffold protein carrying a second [4Fe-4S](2+) cluster] + N(6)-octanoyl-L-lysyl-[protein] + 2 oxidized [2Fe-2S]-[ferredoxin] + 2 S-adenosyl-L-methionine + 4 H(+) = [[Fe-S] cluster scaffold protein] + N(6)-[(R)-dihydrolipoyl]-L-lysyl-[protein] + 4 Fe(3+) + 2 hydrogen sulfide + 2 5'-deoxyadenosine + 2 L-methionine + 2 reduced [2Fe-2S]-[ferredoxin]. It participates in protein modification; protein lipoylation via endogenous pathway; protein N(6)-(lipoyl)lysine from octanoyl-[acyl-carrier-protein]: step 2/2. Its function is as follows. Catalyzes the radical-mediated insertion of two sulfur atoms into the C-6 and C-8 positions of the octanoyl moiety bound to the lipoyl domains of lipoate-dependent enzymes, thereby converting the octanoylated domains into lipoylated derivatives. The chain is Lipoyl synthase from Cereibacter sphaeroides (strain ATCC 17025 / ATH 2.4.3) (Rhodobacter sphaeroides).